A 300-amino-acid polypeptide reads, in one-letter code: Large ribosomal subunit protein uL18 (300 aa).

Positions 246–267 (NIRSDPKRDRKPKKDVSKEPKR) are enriched in basic and acidic residues. A disordered region spans residues 246-276 (NIRSDPKRDRKPKKDVSKEPKRWNAKKLTNA).

Belongs to the universal ribosomal protein uL18 family. As to quaternary structure, component of the large ribosomal subunit (LSU).

The protein resides in the cytoplasm. The protein localises to the nucleus. In terms of biological role, component of the ribosome, a large ribonucleoprotein complex responsible for the synthesis of proteins in the cell. The small ribosomal subunit (SSU) binds messenger RNAs (mRNAs) and translates the encoded message by selecting cognate aminoacyl-transfer RNA (tRNA) molecules. The large subunit (LSU) contains the ribosomal catalytic site termed the peptidyl transferase center (PTC), which catalyzes the formation of peptide bonds, thereby polymerizing the amino acids delivered by tRNAs into a polypeptide chain. The nascent polypeptides leave the ribosome through a tunnel in the LSU and interact with protein factors that function in enzymatic processing, targeting, and the membrane insertion of nascent chains at the exit of the ribosomal tunnel. In Toxoptera citricida (Brown citrus aphid), this protein is Large ribosomal subunit protein uL18 (RpL5).